The following is a 273-amino-acid chain: SPRY domain-containing SOCS box protein 4 (273 aa).

Positions P34 to E233 constitute a B30.2/SPRY domain. Residues P234–Q273 form the SOCS box domain.

This sequence belongs to the SPSB family. Component of the probable ECS(SPSB4) E3 ubiquitin-protein ligase complex which contains CUL5, RNF7/RBX2, Elongin BC complex and SPSB4. Interacts with CUL5; RNF7; ELOB and ELOC. Interacts with MET. Interacts (via B30.2/SPRY domain) with PAWR; this interaction occurs in association with the Elongin BC complex. Interacts with NOS2. Interacts with EPHB2.

It is found in the cytoplasm. It localises to the cytosol. Its pathway is protein modification; protein ubiquitination. Functionally, substrate recognition component of a SCF-like ECS (Elongin BC-CUL2/5-SOCS-box protein) E3 ubiquitin-protein ligase complex which mediates the ubiquitination and subsequent proteasomal degradation of target proteins. Negatively regulates nitric oxide (NO) production and limits cellular toxicity in activated macrophages by mediating the ubiquitination and proteasomal degradation of NOS2. Acts as a bridge which links NOS2 with the ECS E3 ubiquitin ligase complex components ELOC and CUL5. Diminishes EphB2-dependent cell repulsive responses by mediating the ubiquitination and degradation of the EphB2/CTF2. Regulates cellular clock function by mediating ubiquitination and proteasomal degradation of the circadian transcriptional repressor NR1D1. The sequence is that of SPRY domain-containing SOCS box protein 4 (Spsb4) from Mus musculus (Mouse).